The primary structure comprises 382 residues: Deoxyhypusine synthase (382 aa).

NAD(+)-binding positions include 108–112 (SNLIS), 134–136 (TAG), Glu-140, and Asp-257. A spermidine-binding site is contributed by 139–140 (EE). Asp-262 provides a ligand contact to spermidine. Gly-304 contributes to the NAD(+) binding site. Position 309 (His-309) interacts with spermidine. Residue 329–330 (TG) participates in NAD(+) binding. Spermidine-binding positions include 335–337 (GSD) and 344–350 (EAVSWGK). Lys-350 (nucleophile) is an active-site residue. 363 to 364 (DV) provides a ligand contact to NAD(+).

Belongs to the deoxyhypusine synthase family. NAD(+) is required as a cofactor.

The catalysed reaction is [eIF5A protein]-L-lysine + spermidine = [eIF5A protein]-deoxyhypusine + propane-1,3-diamine. It participates in protein modification; eIF5A hypusination. Functionally, catalyzes the NAD-dependent oxidative cleavage of spermidine and the subsequent transfer of the butylamine moiety of spermidine to the epsilon-amino group of a specific lysine residue of the eIF-5A precursor protein to form the intermediate deoxyhypusine residue. In Eremothecium gossypii (strain ATCC 10895 / CBS 109.51 / FGSC 9923 / NRRL Y-1056) (Yeast), this protein is Deoxyhypusine synthase (DYS1).